The sequence spans 20 residues: Non-specific lipid-transfer protein-like protein (20 aa).

Belongs to the plant LTP family.

The sequence is that of Non-specific lipid-transfer protein-like protein from Jatropha curcas (Barbados nut).